The following is a 949-amino-acid chain: L-fucokinase/L-fucose-1-P guanylyltransferase (949 aa).

Residues 25-191 (DWFCTSDPVG…DFMLQKPSLA (167 aa)) are fucose-1-phosphate guanylyltransferase. Residues 559–949 (LLRDGLLDGI…SDKGFQVSRS (391 aa)) are L-fucokinase.

This sequence belongs to the GHMP kinase family. As to quaternary structure, homotetramer. Requires Mn(2+) as cofactor. Mg(2+) serves as cofactor.

It carries out the reaction L-fucose + ATP = beta-L-fucose 1-phosphate + ADP + H(+). The enzyme catalyses beta-L-fucose 1-phosphate + GTP + H(+) = GDP-beta-L-fucose + diphosphate. Bifunctional enzyme involved in the salvage pathway of GDP-fucose synthesis. Catalyzes two successive reactions, the ATP-dependent phosphorylation of L-fucose to L-fucose 1-phosphate, and its guanylylation to GDP-L-fucose. GDP-fucose is an important fucose donor in the process of fucosylated oligosaccharides formation. This chain is L-fucokinase/L-fucose-1-P guanylyltransferase, found in Bacteroides fragilis.